The primary structure comprises 200 residues: Large ribosomal subunit protein uL4 (200 aa).

Residues 43-71 (RAQKTRAEVSGSGKKPWRQKGTGRARSGD) form a disordered region.

The protein belongs to the universal ribosomal protein uL4 family. In terms of assembly, part of the 50S ribosomal subunit.

Functionally, one of the primary rRNA binding proteins, this protein initially binds near the 5'-end of the 23S rRNA. It is important during the early stages of 50S assembly. It makes multiple contacts with different domains of the 23S rRNA in the assembled 50S subunit and ribosome. Forms part of the polypeptide exit tunnel. The chain is Large ribosomal subunit protein uL4 from Actinobacillus pleuropneumoniae serotype 5b (strain L20).